Reading from the N-terminus, the 371-residue chain is Cytochrome b (371 aa).

A run of 4 helical transmembrane segments spans residues F25–V45, W69–I90, W105–L125, and F170–L190. Heme b contacts are provided by H75 and H89. Residues H174 and H188 each contribute to the heme b site. H193 lines the a ubiquinone pocket. The next 4 helical transmembrane spans lie at M218 to F238, L280 to H300, L312 to T332, and F339 to P358.

This sequence belongs to the cytochrome b family. The cytochrome bc1 complex contains 3 respiratory subunits (MT-CYB, CYC1 and UQCRFS1), 2 core proteins (UQCRC1 and UQCRC2) and probably 6 low-molecular weight proteins. It depends on heme b as a cofactor.

The protein resides in the mitochondrion inner membrane. Component of the ubiquinol-cytochrome c reductase complex (complex III or cytochrome b-c1 complex) that is part of the mitochondrial respiratory chain. The b-c1 complex mediates electron transfer from ubiquinol to cytochrome c. Contributes to the generation of a proton gradient across the mitochondrial membrane that is then used for ATP synthesis. The polypeptide is Cytochrome b (MT-CYB) (Boa constrictor (Boa)).